We begin with the raw amino-acid sequence, 263 residues long: Small ribosomal subunit protein uS15m (263 aa).

The transit peptide at 1 to 70 directs the protein to the mitochondrion; sequence MVLKSVFRST…VRQYARPSRK (70 aa). The segment covering 238–251 has biased composition (basic and acidic residues); sequence EREKQKAEEAERKK. The tract at residues 238–263 is disordered; sequence EREKQKAEEAERKKSSSSTNPQETAA.

It belongs to the universal ribosomal protein uS15 family. As to quaternary structure, component of the mitochondrial ribosome small subunit (28S) which comprises a 12S rRNA and about 30 distinct proteins.

Its subcellular location is the mitochondrion. The protein is Small ribosomal subunit protein uS15m (mrps15) of Danio rerio (Zebrafish).